The chain runs to 1198 residues: Fibronectin type-III domain-containing protein 3a (1198 aa).

A compositionally biased stretch (basic and acidic residues) spans 189-201 (KLKDRHGTQKDKL). The segment at 189 to 256 (KLKDRHGTQK…SQTDVEIEEK (68 aa)) is disordered. Low complexity predominate over residues 229-247 (GISTGSTKSKSVGKGKSNS). Fibronectin type-III domains follow at residues 269-370 (NIAK…TMSC), 374-466 (APNL…TSGT), 470-563 (TPAS…TCPD), 567-661 (APSK…TPAV), 665-758 (PCQP…TAPG), 762-852 (QCKP…TPAS), 864-951 (SEDE…TKPL), 952-1045 (PPDP…TPKS), and 1046-1151 (VPAA…TEPP). Residues 553–574 (SETVDYTTCPDKPGAPSKPSVK) are disordered. Residues 1172 to 1192 (VCAAVILALFAIFSILIAVII) form a helical membrane-spanning segment.

Belongs to the FNDC3 family.

It localises to the golgi apparatus membrane. The protein is Fibronectin type-III domain-containing protein 3a (FNDC3A) of Gallus gallus (Chicken).